We begin with the raw amino-acid sequence, 243 residues long: IVGGKTAKFGDYPWMVSIQQKNKKGTFDHICGGAIINVNWILTAAHCFDQPIVKSDYRAYVGLRSILHTKENTVQRLELSKIVLHPGYKPKKDPDDIALIKVAKPIVIGNYANGICVPKGVTNPEGNATVIGWGKISSGGKQVNTLQEVTIPIIPWKKCKEIYGDEFSEFEYSQITPYMICAGAEGKDSCQADSGGPLFQIDANGVATLIGTVANGADCGYKHYPGVYMKVSSYTNWMSKNMV.

Residues 1–243 (IVGGKTAKFG…YTNWMSKNMV (243 aa)) form the Peptidase S1 domain. Cys-31 and Cys-47 form a disulfide bridge. Catalysis depends on charge relay system residues His-46 and Asp-96. N-linked (GlcNAc...) asparagine glycosylation occurs at Asn-127. Intrachain disulfides connect Cys-159/Cys-181 and Cys-190/Cys-219. Residue Ser-194 is the Charge relay system of the active site.

This sequence belongs to the peptidase S1 family. In terms of assembly, heterodimer with venom peptide isomerase light chain; disulfide-linked. In terms of processing, N-linked glycan at Asn-127 consists of Man3-GlcNAc2-Fuc. Expressed by the venom gland.

It localises to the secreted. In terms of biological role, peptide isomerase that inverts the chirality at the Ser-81 of omega-Aga IVB. Acts cofactor-independently. The protein is Venom peptide isomerase heavy chain of Agelenopsis aperta (North American funnel-web spider).